A 236-amino-acid chain; its full sequence is Histone H1 (236 aa).

Basic and acidic residues predominate over residues 1 to 10 (MPPKKTETKA). 2 disordered regions span residues 1-36 (MPPK…SPST) and 94-236 (KGVF…AEKA). The span at 11-36 (ADASAAAAPAPAAAPTSAPKTKSPST) shows a compositional bias: low complexity. The H15 domain maps to 36-111 (THASYLDMIT…GPSGGTKLAK (76 aa)). The span at 109–122 (LAKKVAKPAPKKAA) shows a compositional bias: basic residues. Positions 123 to 150 (PKKETKEKKPAAAKKEGAAKKETKEKKA) are enriched in basic and acidic residues. Over residues 153-162 (AKKAAAPKKA) the composition is skewed to low complexity. A compositionally biased stretch (basic and acidic residues) spans 165–174 (PKKEVKEKKA). The segment covering 202–220 (AKSTAKPAAAKKAAAPKKA) has biased composition (low complexity). Residues 224–236 (KKAEKAEPAAEKA) are compositionally biased toward basic and acidic residues.

It belongs to the histone H1/H5 family.

Its subcellular location is the nucleus. The protein resides in the chromosome. Its function is as follows. Could act as an H1-type linker histone. In Neurospora crassa (strain ATCC 24698 / 74-OR23-1A / CBS 708.71 / DSM 1257 / FGSC 987), this protein is Histone H1 (hH1).